We begin with the raw amino-acid sequence, 275 residues long: MNALTPLSARLERSDGHALVTLARSRGAVRLRDLAQRGSAKAFLPRVEGDVPEVVFLNTSGGLTGGDRLSYRLELGAGCRATATTQTAERAYAAGAGAARVEVLHEVGRDGWLDWLPQETILFEGAALERETQISLAPGAGCLMVESVVLGRAAMGETLSRLAFRDRRSILRAGKPVLVEPLALDDRALAAAGGAAMLGGARALATLAMVGPGAEDALGPARAALGEAGVEAAASAFDGKLVLRLLAADGWPLRRQVARLLTVLRGRALPRVWQV.

Belongs to the UreD family. As to quaternary structure, ureD, UreF and UreG form a complex that acts as a GTP-hydrolysis-dependent molecular chaperone, activating the urease apoprotein by helping to assemble the nickel containing metallocenter of UreC. The UreE protein probably delivers the nickel.

It is found in the cytoplasm. Required for maturation of urease via the functional incorporation of the urease nickel metallocenter. The sequence is that of Urease accessory protein UreD from Cereibacter sphaeroides (strain ATCC 17029 / ATH 2.4.9) (Rhodobacter sphaeroides).